Reading from the N-terminus, the 428-residue chain is Glutamate-1-semialdehyde 2,1-aminomutase 1 (428 aa).

Position 267 is an N6-(pyridoxal phosphate)lysine (lysine 267).

This sequence belongs to the class-III pyridoxal-phosphate-dependent aminotransferase family. HemL subfamily. Homodimer. Pyridoxal 5'-phosphate serves as cofactor.

It is found in the cytoplasm. The enzyme catalyses (S)-4-amino-5-oxopentanoate = 5-aminolevulinate. Its pathway is porphyrin-containing compound metabolism; protoporphyrin-IX biosynthesis; 5-aminolevulinate from L-glutamyl-tRNA(Glu): step 2/2. In Staphylococcus aureus (strain NCTC 8325 / PS 47), this protein is Glutamate-1-semialdehyde 2,1-aminomutase 1 (hemL1).